The sequence spans 808 residues: Leucine--tRNA ligase (808 aa).

The 'HIGH' region motif lies at Pro40–His51. Residues Lys580–Ser584 carry the 'KMSKS' region motif. Lys583 is an ATP binding site.

Belongs to the class-I aminoacyl-tRNA synthetase family.

The protein localises to the cytoplasm. It catalyses the reaction tRNA(Leu) + L-leucine + ATP = L-leucyl-tRNA(Leu) + AMP + diphosphate. This Leuconostoc mesenteroides subsp. mesenteroides (strain ATCC 8293 / DSM 20343 / BCRC 11652 / CCM 1803 / JCM 6124 / NCDO 523 / NBRC 100496 / NCIMB 8023 / NCTC 12954 / NRRL B-1118 / 37Y) protein is Leucine--tRNA ligase.